A 392-amino-acid polypeptide reads, in one-letter code: Protein FAM53C (392 aa).

Met1 is modified (N-acetylmethionine). A disordered region spans residues 78–119 (LRPPSRGNSPKEQPFSQVLRPEPPDPEKLPVPPAPPSKRHCR). The segment covering 83 to 93 (RGNSPKEQPFS) has biased composition (polar residues). 6 positions are modified to phosphoserine: Ser122, Ser162, Ser232, Ser234, Ser255, and Ser273. Disordered stretches follow at residues 141–167 (LWTP…PKRV) and 204–294 (RPCA…EDPR). A compositionally biased stretch (low complexity) spans 241 to 256 (ASRFLPSARSSPASSP). Over residues 278–294 (LDARKTGVKRRHEEDPR) the composition is skewed to basic and acidic residues. The residue at position 299 (Ser299) is a Phosphoserine. The interval 341–364 (ASCSPTGGSSQVLSESEEEEEGAV) is disordered.

This sequence belongs to the FAM53 family.

This chain is Protein FAM53C, found in Homo sapiens (Human).